Reading from the N-terminus, the 121-residue chain is Ribonuclease P protein component (121 aa).

It belongs to the RnpA family. As to quaternary structure, consists of a catalytic RNA component (M1 or rnpB) and a protein subunit.

The enzyme catalyses Endonucleolytic cleavage of RNA, removing 5'-extranucleotides from tRNA precursor.. Its function is as follows. RNaseP catalyzes the removal of the 5'-leader sequence from pre-tRNA to produce the mature 5'-terminus. It can also cleave other RNA substrates such as 4.5S RNA. The protein component plays an auxiliary but essential role in vivo by binding to the 5'-leader sequence and broadening the substrate specificity of the ribozyme. This is Ribonuclease P protein component from Geobacillus thermodenitrificans (strain NG80-2).